A 195-amino-acid polypeptide reads, in one-letter code: Inner membrane-spanning protein YciB (195 aa).

5 helical membrane passes run 34 to 54, 65 to 85, 88 to 108, 131 to 151, and 160 to 180; these read IYGATATLILASVIVYGALWL, FTLGACLVLGGLTLAFHEDTF, WKAPLVNWLFALAFAGSHFIG, LNIAWVVFFLVCGFANLYVVF, and FKVFGSLGMTLLFLIGQGIFL.

It belongs to the YciB family.

Its subcellular location is the cell inner membrane. Plays a role in cell envelope biogenesis, maintenance of cell envelope integrity and membrane homeostasis. In Pseudomonas paraeruginosa (strain DSM 24068 / PA7) (Pseudomonas aeruginosa (strain PA7)), this protein is Inner membrane-spanning protein YciB.